The chain runs to 429 residues: Probable M18 family aminopeptidase 2 (429 aa).

Zn(2+)-binding residues include His-82, His-156, and His-401.

The protein belongs to the peptidase M18 family. Zn(2+) serves as cofactor.

The sequence is that of Probable M18 family aminopeptidase 2 from Pseudomonas syringae pv. syringae (strain B728a).